A 148-amino-acid polypeptide reads, in one-letter code: uncharacterized protein (148 aa).

The interval 55–148 is disordered; that stretch reads KMRCGESGAG…RNQGQLYPQP (94 aa). Polar residues predominate over residues 68-104; the sequence is RSNSAEVSSSQPALASKSQSKWGPTSNNPRGALTTTE.

This is an uncharacterized protein from Homo sapiens (Human).